The chain runs to 180 residues: MGIPMGKSMLVLLTFLAFASCCIAAYRPSETLCGGELVDTLQFVCGDRGFYFSRPASRVSRRSRGIVEECCFRSCDLALLETYCATPAKSERDVSTPPTVLPDNFPRYPVGKFFQYDTWKQSTQRLRRGLPALLRARRGHVLAKELEAFREAKRHRPLIALPTQDPAHGGAPPEMASNRK.

A signal peptide spans 1-24 (MGIPMGKSMLVLLTFLAFASCCIA). The b stretch occupies residues 25-52 (AYRPSETLCGGELVDTLQFVCGDRGFYF). 3 disulfides stabilise this stretch: Cys33-Cys71, Cys45-Cys84, and Cys70-Cys75. Positions 53 to 64 (SRPASRVSRRSR) are c. The tract at residues 65–85 (GIVEECCFRSCDLALLETYCA) is a. Residues 86–91 (TPAKSE) form a d region. Residues 92 to 180 (RDVSTPPTVL…APPEMASNRK (89 aa)) constitute a propeptide, e peptide. 3 O-linked (GalNAc...) threonine glycosylation sites follow: Thr96, Thr99, and Thr163. Residues 161-180 (LPTQDPAHGGAPPEMASNRK) are disordered.

The protein belongs to the insulin family. In terms of assembly, interacts with MYORG; this interaction is required for IGF2 secretion. Interacts with integrins ITGAV:ITGB3 and ITGA6:ITGB4; integrin-binding is required for IGF2 signaling. Interacts with IGFBP2. O-glycosylated with core 1 or possibly core 8 glycans. Thr-96 is a minor glycosylation site compared to Thr-99. Post-translationally, proteolytically processed by PCSK4, proIGF2 is cleaved at Arg-128 and Arg-92 to generate big-IGF2 and mature IGF2. Expressed in heart, placenta, lung, liver, muscle, kidney, tongue, limb, eye and pancreas.

Its subcellular location is the secreted. Functionally, the insulin-like growth factors possess growth-promoting activity. Major fetal growth hormone in mammals. Plays a key role in regulating fetoplacental development. IGF2 is influenced by placental lactogen. Also involved in tissue differentiation. In adults, involved in glucose metabolism in adipose tissue, skeletal muscle and liver. Acts as a ligand for integrin which is required for IGF2 signaling. Positively regulates myogenic transcription factor MYOD1 function by facilitating the recruitment of transcriptional coactivators, thereby controlling muscle terminal differentiation. Inhibits myoblast differentiation and modulates metabolism via increasing the mitochondrial respiration rate. In terms of biological role, preptin undergoes glucose-mediated co-secretion with insulin, and acts as a physiological amplifier of glucose-mediated insulin secretion. Exhibits osteogenic properties by increasing osteoblast mitogenic activity through phosphoactivation of MAPK1 and MAPK3. In Homo sapiens (Human), this protein is Insulin-like growth factor 2.